A 69-amino-acid polypeptide reads, in one-letter code: Putative membrane protein insertion efficiency factor (69 aa).

This sequence belongs to the UPF0161 family.

The protein resides in the cell membrane. Functionally, could be involved in insertion of integral membrane proteins into the membrane. This chain is Putative membrane protein insertion efficiency factor, found in Clostridium botulinum (strain ATCC 19397 / Type A).